Consider the following 922-residue polypeptide: DNA gyrase subunit A (922 aa).

The span at 1 to 14 shows a compositional bias: low complexity; that stretch reads MTETPTDGGSTPPS. The tract at residues 1-24 is disordered; it reads MTETPTDGGSTPPSDGGGPGGRIE. The Topo IIA-type catalytic domain maps to 49–518; sequence LPDVRDGLKP…ADGDLSMEDL (470 aa). Tyr-137 (O-(5'-phospho-DNA)-tyrosine intermediate) is an active-site residue. The short motif at 545 to 551 is the GyrA-box element; sequence QRRGGKG. The tract at residues 861-922 is disordered; it reads EANGDDELDE…TEPDPGESDG (62 aa). Composition is skewed to acidic residues over residues 863-890 and 912-922; these read NGDD…DESA and DTEPDPGESDG.

It belongs to the type II topoisomerase GyrA/ParC subunit family. As to quaternary structure, heterotetramer, composed of two GyrA and two GyrB chains. In the heterotetramer, GyrA contains the active site tyrosine that forms a transient covalent intermediate with DNA, while GyrB binds cofactors and catalyzes ATP hydrolysis.

The protein resides in the cytoplasm. The enzyme catalyses ATP-dependent breakage, passage and rejoining of double-stranded DNA.. In terms of biological role, a type II topoisomerase that negatively supercoils closed circular double-stranded (ds) DNA in an ATP-dependent manner to modulate DNA topology and maintain chromosomes in an underwound state. Negative supercoiling favors strand separation, and DNA replication, transcription, recombination and repair, all of which involve strand separation. Also able to catalyze the interconversion of other topological isomers of dsDNA rings, including catenanes and knotted rings. Type II topoisomerases break and join 2 DNA strands simultaneously in an ATP-dependent manner. The sequence is that of DNA gyrase subunit A from Nocardioides sp. (strain ATCC BAA-499 / JS614).